A 168-amino-acid chain; its full sequence is G/U mismatch-specific DNA glycosylase (168 aa).

This sequence belongs to the uracil-DNA glycosylase (UDG) superfamily. TDG/mug family. As to quaternary structure, binds DNA as a monomer.

Its subcellular location is the cytoplasm. The enzyme catalyses Specifically hydrolyzes mismatched double-stranded DNA and polynucleotides, releasing free uracil.. Its function is as follows. Excises ethenocytosine and uracil, which can arise by alkylation or deamination of cytosine, respectively, from the corresponding mispairs with guanine in ds-DNA. It is capable of hydrolyzing the carbon-nitrogen bond between the sugar-phosphate backbone of the DNA and the mispaired base. The complementary strand guanine functions in substrate recognition. Required for DNA damage lesion repair in stationary-phase cells. The chain is G/U mismatch-specific DNA glycosylase from Escherichia coli (strain UTI89 / UPEC).